A 140-amino-acid chain; its full sequence is Ribosome-binding factor A (140 aa).

The protein belongs to the RbfA family. Monomer. Binds 30S ribosomal subunits, but not 50S ribosomal subunits or 70S ribosomes.

It is found in the cytoplasm. Its function is as follows. One of several proteins that assist in the late maturation steps of the functional core of the 30S ribosomal subunit. Associates with free 30S ribosomal subunits (but not with 30S subunits that are part of 70S ribosomes or polysomes). Required for efficient processing of 16S rRNA. May interact with the 5'-terminal helix region of 16S rRNA. This chain is Ribosome-binding factor A, found in Cereibacter sphaeroides (strain ATCC 17025 / ATH 2.4.3) (Rhodobacter sphaeroides).